A 153-amino-acid polypeptide reads, in one-letter code: Transcription antitermination protein NusB (153 aa).

The protein belongs to the NusB family.

Involved in transcription antitermination. Required for transcription of ribosomal RNA (rRNA) genes. Binds specifically to the boxA antiterminator sequence of the ribosomal RNA (rrn) operons. This chain is Transcription antitermination protein NusB, found in Fusobacterium nucleatum subsp. nucleatum (strain ATCC 25586 / DSM 15643 / BCRC 10681 / CIP 101130 / JCM 8532 / KCTC 2640 / LMG 13131 / VPI 4355).